Consider the following 616-residue polypeptide: Proline--tRNA ligase (616 aa).

This sequence belongs to the class-II aminoacyl-tRNA synthetase family. ProS type 1 subfamily. Homodimer.

It is found in the cytoplasm. The enzyme catalyses tRNA(Pro) + L-proline + ATP = L-prolyl-tRNA(Pro) + AMP + diphosphate. Catalyzes the attachment of proline to tRNA(Pro) in a two-step reaction: proline is first activated by ATP to form Pro-AMP and then transferred to the acceptor end of tRNA(Pro). As ProRS can inadvertently accommodate and process non-cognate amino acids such as alanine and cysteine, to avoid such errors it has two additional distinct editing activities against alanine. One activity is designated as 'pretransfer' editing and involves the tRNA(Pro)-independent hydrolysis of activated Ala-AMP. The other activity is designated 'posttransfer' editing and involves deacylation of mischarged Ala-tRNA(Pro). The misacylated Cys-tRNA(Pro) is not edited by ProRS. This is Proline--tRNA ligase from Streptococcus sanguinis (strain SK36).